Reading from the N-terminus, the 248-residue chain is CKLF-like MARVEL transmembrane domain-containing protein 2 (248 aa).

Residues methionine 1–glycine 63 are disordered. The segment covering glutamate 12 to alanine 22 has biased composition (pro residues). A compositionally biased stretch (basic and acidic residues) spans lysine 23–glycine 63. Residues phenylalanine 82–arginine 204 form the MARVEL domain. The next 3 helical transmembrane spans lie at leucine 116–isoleucine 136, isoleucine 147–alanine 167, and tyrosine 178–leucine 198. Positions alanine 208–lysine 248 are disordered. Residues proline 231–lysine 248 show a composition bias toward pro residues.

It belongs to the chemokine-like factor family. Highly expressed in testis.

The protein resides in the membrane. This is CKLF-like MARVEL transmembrane domain-containing protein 2 (CMTM2) from Homo sapiens (Human).